The sequence spans 968 residues: RNA polymerase-associated protein RapA (968 aa).

Positions 163–332 (EVGRRYAPRV…FARLRLLDPD (170 aa)) constitute a Helicase ATP-binding domain. 176-183 (DEVGLGKT) serves as a coordination point for ATP. Positions 278–281 (DEAH) match the DEAH box motif. Residues 491–655 (RVDWLIEFLK…EFAEDLLNVL (165 aa)) form the Helicase C-terminal domain.

This sequence belongs to the SNF2/RAD54 helicase family. RapA subfamily. Interacts with the RNAP. Has a higher affinity for the core RNAP than for the holoenzyme. Its ATPase activity is stimulated by binding to RNAP.

Its function is as follows. Transcription regulator that activates transcription by stimulating RNA polymerase (RNAP) recycling in case of stress conditions such as supercoiled DNA or high salt concentrations. Probably acts by releasing the RNAP, when it is trapped or immobilized on tightly supercoiled DNA. Does not activate transcription on linear DNA. Probably not involved in DNA repair. In Shewanella sp. (strain ANA-3), this protein is RNA polymerase-associated protein RapA.